We begin with the raw amino-acid sequence, 342 residues long: Signaling lymphocytic activation molecule (342 aa).

The N-terminal stretch at 1-26 is a signal peptide; sequence MDSRGFLSLRCLLVLALASKLSCGTG. Residues 27-237 lie on the Extracellular side of the membrane; the sequence is ESLMNCPEVP…CRPESSVPRQ (211 aa). One can recognise an Ig-like V-type domain in the interval 29–138; sequence LMNCPEVPGK…QHFCLQLKLY (110 aa). Asn57, Asn102, Asn125, Asn150, Asn157, Asn189, and Asn217 each carry an N-linked (GlcNAc...) asparagine glycan. Residues 144 to 223 enclose the Ig-like C2-type domain; it reads PEIKVLNWTQ…PVSNRSWSFN (80 aa). 2 cysteine pairs are disulfide-bonded: Cys158–Cys228 and Cys164–Cys209. The chain crosses the membrane as a helical span at residues 238 to 261; it reads WRLYAGLFLGGIVGVILIFEVVLL. The Cytoplasmic segment spans residues 262–342; sequence LLRRRGKTNH…VYASVTFPES (81 aa). The ITSM 1 motif lies at 282-287; that stretch reads TIYAQV. Tyr284, Tyr310, and Tyr334 each carry phosphotyrosine; by FYN. Positions 310–315 match the SH2-binding motif; it reads YVAATE. The ITSM 2 signature appears at 332 to 337; the sequence is TVYASV.

In terms of assembly, interacts (via cytoplasmic domain) with SH2D1A and SH2D1B; SH2D1A mediates association with FYN. Interacts (via cytoplasmic domain phosphorylated on tyrosine residues) with INPP5D and PTPN11; presence of SH2D1A facilitates binding to INPP5D. Interacts with MAP4K1. Interacts with PIK3C3, BECN1 and UVRAG; indicative for an association with PI3K complex II (PI3KC3-C2). Interacts with canine distemper virus HN protein; suggesting that it may serve as a receptor. In terms of processing, phosphorylated on tyrosine residues by FYN.

The protein localises to the cell membrane. Self-ligand receptor of the signaling lymphocytic activation molecule (SLAM) family. SLAM receptors triggered by homo- or heterotypic cell-cell interactions are modulating the activation and differentiation of a wide variety of immune cells and thus are involved in the regulation and interconnection of both innate and adaptive immune response. Activities are controlled by presence or absence of small cytoplasmic adapter proteins, SH2D1A/SAP and/or SH2D1B/EAT-2. SLAMF1-induced signal-transduction events in T-lymphocytes are different from those in B-cells. Two modes of SLAMF1 signaling seem to exist: one depending on SH2D1A (and perhaps SH2D1B) and another in which protein-tyrosine phosphatase 2C (PTPN11)-dependent signal transduction operates. Initially it has been proposed that association with SH2D1A prevents binding to inhibitory effectors including INPP5D/SHIP1 and PTPN11/SHP-2. However, signaling is also regulated by SH2D1A which can simultaneously interact with and recruit FYN which subsequently phosphorylates and activates SLAMF1. Mediates IL-2-independent proliferation of activated T cells during immune responses and induces IFN-gamma production. Downstreaming signaling involves INPP5D/SHIP1, DOK1 and DOK2 leading to inhibited IFN-gamma production in T-cells, and PRKCQ, BCL10 and NFKB1 leading to increased T-cell activation and Th2 cytokine production. Promotes T-cell receptor-induced IL-4 secretion by CD4(+) cells. Inhibits antigen receptor-mediated production of IFN-gamma, but not IL-2, in CD4(-)/CD8(-) T-cells. Required for IL-4 production by germinal centers T follicular helper (T(Fh))cells. May inhibit CD40-induced signal transduction in monocyte-derived dendritic cells. May play a role in allergic responses and may regulate allergen-induced Th2 cytokine and Th1 cytokine secretion. In conjunction with SLAMF6 controls the transition between positive selection and the subsequent expansion and differentiation of the thymocytic natural killer T (NKT) cell lineage. Involved in the peripheral differentiation of indifferent natural killer T (iNKT) cells toward a regulatory NKT2 type. In macrophages involved in down-regulation of IL-12, TNF-alpha and nitric oxide in response to lipopolysaccharide (LPS). In B-cells activates the ERK signaling pathway independently of SH2D1A but implicating both, SYK and INPP5D, and activates Akt signaling dependent on SYK and SH2D1A. In conjunction with SLAMF5 and SLAMF6 may be a negative regulator of the humoral immune response. In Canis lupus familiaris (Dog), this protein is Signaling lymphocytic activation molecule (SLAMF1).